Here is a 277-residue protein sequence, read N- to C-terminus: Protein OPG166 (277 aa).

2 N-linked (GlcNAc...) asparagine; by host glycosylation sites follow: N29 and N58. The next 5 helical transmembrane spans lie at 124 to 144 (TMLM…EIAY), 156 to 176 (GILQ…AFLF), 186 to 206 (IIGL…KVFS), 219 to 239 (LIIY…GLSL), and 247 to 267 (LLLS…LFLV).

This sequence belongs to the orthopoxvirus OPG166 protein family.

The protein localises to the host membrane. Promotes, when overexpressed, the influx of extracellular Ca(2+), leading to membrane permeability and host cell necrosis. This chain is Protein OPG166 (OPG166), found in Variola virus (isolate Human/India/Ind3/1967) (VARV).